Here is a 386-residue protein sequence, read N- to C-terminus: Mannitol-1-phosphate 5-dehydrogenase (386 aa).

Residue 3-14 (AVHFGAGNIGRG) coordinates NAD(+).

It belongs to the mannitol dehydrogenase family.

It carries out the reaction D-mannitol 1-phosphate + NAD(+) = beta-D-fructose 6-phosphate + NADH + H(+). This is Mannitol-1-phosphate 5-dehydrogenase from Brevibacillus brevis (strain 47 / JCM 6285 / NBRC 100599).